The chain runs to 422 residues: 5-hydroxytryptamine receptor 1A (422 aa).

Over 1–38 (MDVFSFGQGNNTTASQEPFGTGGNVTSISDVTFSYQVI) the chain is Extracellular. Asn10, Asn11, and Asn24 each carry an N-linked (GlcNAc...) asparagine glycan. A helical membrane pass occupies residues 39 to 59 (TSLLLGTLIFCAVLGNACVVA). Residues 60 to 73 (AIALERSLQNVANY) lie on the Cytoplasmic side of the membrane. A helical membrane pass occupies residues 74–98 (LIGSLAVTDLMVSVLVLPMAALYQV). At 99–107 (LNKWTLGQV) the chain is on the extracellular side. A helical membrane pass occupies residues 108–132 (TCDLFIALDVLCCTSSILHLCAIAL). A disulfide bond links Cys109 and Cys187. The serotonin site is built by Asp116 and Cys120. A DRY motif; important for ligand-induced conformation changes motif is present at residues 133-135 (DRY). At 133–152 (DRYWAITDPIDYVNKRTPRR) the chain is on the cytoplasmic side. Residues 153-174 (AAALISLTWLIGFLISIPPMLG) form a helical membrane-spanning segment. Topologically, residues 175–193 (WRTPEDRSDPDACTISKDH) are extracellular. Residues 194 to 216 (GYTIYSTFGAFYIPLLLMLVLYG) form a helical membrane-spanning segment. Over 217-346 (RIFRAARFRI…LARERKTVKT (130 aa)) the chain is Cytoplasmic. Positions 235–261 (KKGAGTSLGTSSAPPPKKSLNGQPGSG) are disordered. 1D-myo-inositol 4-phosphate contacts are provided by Lys345, Thr346, and Gly352. The chain crosses the membrane as a helical span at residues 347–370 (LGIIMGTFILCWLPFFIVALVLPF). Residues 371 to 378 (CESSCHMP) are Extracellular-facing. The helical transmembrane segment at 379-403 (ALLGAIINWLGYSNSLLNPVIYAYF) threads the bilayer. The NPxxY motif; important for ligand-induced conformation changes and signaling motif lies at 396–400 (NPVIY). 1D-myo-inositol 4-phosphate contacts are provided by Phe403, Asn404, and Lys405. The Cytoplasmic portion of the chain corresponds to 404–422 (NKDFQNAFKKIIKCKFCRR).

Belongs to the G-protein coupled receptor 1 family. 5-hydroxytryptamine receptor subfamily. HTR1A sub-subfamily. In terms of assembly, heterodimer; heterodimerizes with GPER1. Interacts with YIF1B. Interacts with GPR39 and GALR1. In terms of tissue distribution, detected in hypothalamus, mesencephalon, amygdala, medulla, thalamus, septum and hippocampus.

The protein localises to the cell membrane. It localises to the cell projection. It is found in the dendrite. Its activity is regulated as follows. G-protein coupled receptor activity is regulated by lipids: phosphatidylinositol 4-phosphate increases HTR1A-mediated activity. Its function is as follows. G-protein coupled receptor for 5-hydroxytryptamine (serotonin). Also functions as a receptor for various drugs and psychoactive substances. Ligand binding causes a conformation change that triggers signaling via guanine nucleotide-binding proteins (G proteins) and modulates the activity of downstream effectors, such as adenylate cyclase. HTR1A is coupled to G(i)/G(o) G alpha proteins and mediates inhibitory neurotransmission: signaling inhibits adenylate cyclase activity and activates a phosphatidylinositol-calcium second messenger system that regulates the release of Ca(2+) ions from intracellular stores. Beta-arrestin family members regulate signaling by mediating both receptor desensitization and resensitization processes. This is 5-hydroxytryptamine receptor 1A from Rattus norvegicus (Rat).